The following is a 132-amino-acid chain: Large ribosomal subunit protein uL14 (132 aa).

This sequence belongs to the universal ribosomal protein uL14 family. As to quaternary structure, part of the 50S ribosomal subunit. Forms a cluster with proteins L3 and L24e, part of which may contact the 16S rRNA in 2 intersubunit bridges.

Functionally, binds to 23S rRNA. Forms part of two intersubunit bridges in the 70S ribosome. The polypeptide is Large ribosomal subunit protein uL14 (Methanococcus vannielii).